The chain runs to 112 residues: Large ribosomal subunit protein bL21 (112 aa).

This sequence belongs to the bacterial ribosomal protein bL21 family. As to quaternary structure, part of the 50S ribosomal subunit. Contacts protein L20.

This protein binds to 23S rRNA in the presence of protein L20. In Buchnera aphidicola subsp. Baizongia pistaciae (strain Bp), this protein is Large ribosomal subunit protein bL21.